A 409-amino-acid polypeptide reads, in one-letter code: Elongation factor Tu (409 aa).

Residues 10 to 214 (KPHVNIGTIG…AVDAYIPTPE (205 aa)) enclose the tr-type G domain. The segment at 19-26 (GHVDHGKT) is G1. 19–26 (GHVDHGKT) lines the GTP pocket. A Mg(2+)-binding site is contributed by threonine 26. The tract at residues 60-64 (GITIN) is G2. The G3 stretch occupies residues 81 to 84 (DCPG). GTP-binding positions include 81-85 (DCPGH) and 136-139 (NKKD). The tract at residues 136 to 139 (NKKD) is G4. The G5 stretch occupies residues 174–176 (SAL).

Belongs to the TRAFAC class translation factor GTPase superfamily. Classic translation factor GTPase family. EF-Tu/EF-1A subfamily. In terms of assembly, monomer.

The protein resides in the cytoplasm. The enzyme catalyses GTP + H2O = GDP + phosphate + H(+). Its function is as follows. GTP hydrolase that promotes the GTP-dependent binding of aminoacyl-tRNA to the A-site of ribosomes during protein biosynthesis. The polypeptide is Elongation factor Tu (Gloeobacter violaceus (strain ATCC 29082 / PCC 7421)).